The primary structure comprises 244 residues: 2,5-diamino-6-ribosylamino-4(3H)-pyrimidinone 5'-phosphate reductase (244 aa).

Residues T74, D78, I160, and 183–187 (GSHVI) contribute to the NADP(+) site.

This sequence belongs to the HTP reductase family. In terms of assembly, homodimer.

It catalyses the reaction 2,5-diamino-6-(1-D-ribitylamino)pyrimidin-4(3H)-one 5'-phosphate + NADP(+) = 2,5-diamino-6-(1-D-ribosylamino)pyrimidin-4(3H)-one 5'-phosphate + NADPH + H(+). It carries out the reaction 2,5-diamino-6-(1-D-ribitylamino)pyrimidin-4(3H)-one 5'-phosphate + NAD(+) = 2,5-diamino-6-(1-D-ribosylamino)pyrimidin-4(3H)-one 5'-phosphate + NADH + H(+). It participates in cofactor biosynthesis; riboflavin biosynthesis. Its function is as follows. Catalyzes an early step in riboflavin biosynthesis, the NADPH-dependent reduction of the ribose side chain of 2,5-diamino-6-ribosylamino-4(3H)-pyrimidinone 5'-phosphate, yielding 2,5-diamino-6-ribitylamino-4(3H)-pyrimidinone 5'-phosphate. The sequence is that of 2,5-diamino-6-ribosylamino-4(3H)-pyrimidinone 5'-phosphate reductase (RIB7) from Candida glabrata (strain ATCC 2001 / BCRC 20586 / JCM 3761 / NBRC 0622 / NRRL Y-65 / CBS 138) (Yeast).